We begin with the raw amino-acid sequence, 470 residues long: Acetyl-CoA decarbonylase/synthase complex subunit beta 2 (470 aa).

4 residues coordinate [Ni-Fe-S] cluster: cysteine 189, cysteine 192, cysteine 278, and cysteine 280.

The protein belongs to the CdhC family. In terms of assembly, monomer. The ACDS complex is made up of alpha, epsilon, beta, gamma and delta chains with a probable stoichiometry of (alpha(2)epsilon(2))(4)-beta(8)-(gamma(1)delta(1))(8) (Potential). The cofactor is [Ni-Fe-S] cluster.

It carries out the reaction Co(I)-[corrinoid Fe-S protein] + acetyl-CoA + H(+) = methyl-Co(III)-[corrinoid Fe-S protein] + CO + CoA. It participates in one-carbon metabolism; methanogenesis from acetate. Its function is as follows. Part of a complex that catalyzes the reversible cleavage of acetyl-CoA, allowing growth on acetate as sole source of carbon and energy. The alpha-epsilon complex generates CO from CO(2), while the beta subunit (this protein) combines the CO with CoA and a methyl group to form acetyl-CoA. The methyl group, which is incorporated into acetyl-CoA, is transferred to the beta subunit by a corrinoid iron-sulfur protein (the gamma-delta complex). This chain is Acetyl-CoA decarbonylase/synthase complex subunit beta 2 (cdhC2), found in Methanosarcina acetivorans (strain ATCC 35395 / DSM 2834 / JCM 12185 / C2A).